Here is a 100-residue protein sequence, read N- to C-terminus: RxLR effector protein SFI8 (100 aa).

The first 22 residues, 1–22, serve as a signal peptide directing secretion; it reads MRSILYAVLAFAVLARSSAVAA. The RxLR-dEER motif lies at 43–57; the sequence is RSLRVEAQEVIQSGR. The Calmodulin-binding motif signature appears at 78 to 82; sequence KPDIK.

It belongs to the RxLR effector family. As to quaternary structure, interacts with the host calmodulin.

The protein localises to the secreted. The protein resides in the host nucleus. Its subcellular location is the host cytoplasm. In terms of biological role, effector that suppresses flg22-induced post-translational MAP kinase activation both tomato and Arabidopsis. The perception of highly conserved pathogen- or microbe-associated molecular patterns (PAMPs/MAMPs), such as flg22, triggers converging signaling pathways recruiting MAP kinase cascades and inducing transcriptional re-programming, yielding a generic antimicrobial response. Associates with calmodulin to interfere with plant defense-associated calcium signaling in hosts. In Phytophthora infestans (strain T30-4) (Potato late blight agent), this protein is RxLR effector protein SFI8.